A 171-amino-acid chain; its full sequence is Co-chaperone protein HscB homolog (171 aa).

Positions 2 to 74 constitute a J domain; sequence NHFELFGLPP…ISRAEYLLSQ (73 aa).

The protein belongs to the HscB family. In terms of assembly, interacts with HscA and stimulates its ATPase activity.

Functionally, co-chaperone involved in the maturation of iron-sulfur cluster-containing proteins. Seems to help targeting proteins to be folded toward HscA. In Vibrio vulnificus (strain YJ016), this protein is Co-chaperone protein HscB homolog.